Reading from the N-terminus, the 232-residue chain is Membrane steroid-binding protein 1 (232 aa).

The helical transmembrane segment at 25-45 (AAFFTAVAAAAALYHVVSGIF) threads the bilayer. Disordered stretches follow at residues 48–77 (PPPP…VSEE) and 172–232 (TVPV…AKES). In terms of domain architecture, Cytochrome b5 heme-binding spans 71–170 (LGEVSEEELR…GKYVKVGTVK (100 aa)). Positions 73–170 (EVSEEELRQY…GKYVKVGTVK (98 aa)) are steroid-binding. The span at 179-193 (APSTSPETTETAAAA) shows a compositional bias: low complexity. Residues 194 to 219 (EPEKAPATEEKPREVSSEEVKEKEDA) are compositionally biased toward basic and acidic residues.

Belongs to the cytochrome b5 family. MAPR subfamily. Interacts with SERL2. In terms of tissue distribution, expressed in leaf sheaths, leaf blades and panicles.

The protein localises to the cell membrane. Binds multiple steroid compounds. May act as a coreceptor with SERL2 and enhance its endocytosis. This chain is Membrane steroid-binding protein 1, found in Oryza sativa subsp. japonica (Rice).